Here is a 131-residue protein sequence, read N- to C-terminus: Glycine cleavage system H protein (131 aa).

The Lipoyl-binding domain maps to T24 to R106. At K65 the chain carries N6-lipoyllysine.

The protein belongs to the GcvH family. The glycine cleavage system is composed of four proteins: P, T, L and H. It depends on (R)-lipoate as a cofactor.

Its function is as follows. The glycine cleavage system catalyzes the degradation of glycine. The H protein shuttles the methylamine group of glycine from the P protein to the T protein. The chain is Glycine cleavage system H protein from Mycolicibacterium smegmatis (strain ATCC 700084 / mc(2)155) (Mycobacterium smegmatis).